The sequence spans 161 residues: Chaperone protein dnaJ 11, chloroplastic (161 aa).

The span at 1 to 18 shows a compositional bias: low complexity; the sequence is MLSSSPTSFTHPFLSSSP. The interval 1–31 is disordered; that stretch reads MLSSSPTSFTHPFLSSSPPLSPISPPSRTAR. The N-terminal 36 residues, 1 to 36, are a transit peptide targeting the chloroplast; that stretch reads MLSSSPTSFTHPFLSSSPPLSPISPPSRTARISPPL. A J domain is found at 65–133; that stretch reads SLYDVLEVPL…EKRSVYDRRM (69 aa).

This sequence belongs to the DnaJ family. C/III subfamily. Expressed in roots, stems, leaves, flowers and developing siliques.

It is found in the plastid. Its subcellular location is the chloroplast stroma. Plays a continuous role in plant development probably in the structural organization of compartments. The polypeptide is Chaperone protein dnaJ 11, chloroplastic (ATJ11) (Arabidopsis thaliana (Mouse-ear cress)).